The following is a 267-amino-acid chain: Thymidylate synthase (267 aa).

Arg24 contacts dUMP. Residue His54 participates in (6R)-5,10-methylene-5,6,7,8-tetrahydrofolate binding. 129 to 130 (RR) serves as a coordination point for dUMP. Cys149 (nucleophile) is an active-site residue. Residues 169-172 (RSAD), Asn180, and 210-212 (HIY) each bind dUMP. Asp172 is a binding site for (6R)-5,10-methylene-5,6,7,8-tetrahydrofolate. Ala266 provides a ligand contact to (6R)-5,10-methylene-5,6,7,8-tetrahydrofolate.

Belongs to the thymidylate synthase family. Bacterial-type ThyA subfamily. As to quaternary structure, homodimer.

Its subcellular location is the cytoplasm. The catalysed reaction is dUMP + (6R)-5,10-methylene-5,6,7,8-tetrahydrofolate = 7,8-dihydrofolate + dTMP. The protein operates within pyrimidine metabolism; dTTP biosynthesis. Catalyzes the reductive methylation of 2'-deoxyuridine-5'-monophosphate (dUMP) to 2'-deoxythymidine-5'-monophosphate (dTMP) while utilizing 5,10-methylenetetrahydrofolate (mTHF) as the methyl donor and reductant in the reaction, yielding dihydrofolate (DHF) as a by-product. This enzymatic reaction provides an intracellular de novo source of dTMP, an essential precursor for DNA biosynthesis. The sequence is that of Thymidylate synthase from Arthrobacter sp. (strain FB24).